The following is a 142-amino-acid chain: Large ribosomal subunit protein uL13c (142 aa).

It belongs to the universal ribosomal protein uL13 family. In terms of assembly, part of the 50S ribosomal subunit.

It localises to the plastid. It is found in the chloroplast. This Porphyra purpurea (Red seaweed) protein is Large ribosomal subunit protein uL13c.